The primary structure comprises 158 residues: Ecotin (158 aa).

The N-terminal stretch at 1-21 is a signal peptide; that stretch reads MRLLPLASVTLLSVLCAQAFA. Cys-67 and Cys-104 form a disulfide bridge.

This sequence belongs to the protease inhibitor I11 (ecotin) family. Homodimer.

Its subcellular location is the periplasm. General inhibitor of family S1 serine proteases. The protein is Ecotin of Pseudomonas fluorescens (strain ATCC BAA-477 / NRRL B-23932 / Pf-5).